The sequence spans 659 residues: DNA mismatch repair protein MutL (659 aa).

It belongs to the DNA mismatch repair MutL/HexB family.

Its function is as follows. This protein is involved in the repair of mismatches in DNA. It is required for dam-dependent methyl-directed DNA mismatch repair. May act as a 'molecular matchmaker', a protein that promotes the formation of a stable complex between two or more DNA-binding proteins in an ATP-dependent manner without itself being part of a final effector complex. The sequence is that of DNA mismatch repair protein MutL from Ligilactobacillus salivarius (strain UCC118) (Lactobacillus salivarius).